The following is a 449-amino-acid chain: MKLTQRLSLRVRLTLIFLILVSITWAISSFVAWRKTTDNVDELFDTQLMLFARRLSTLDLNELNAPQRMAHTPKKLKHGHIDDDALAFAIFSADGKMLLHDGDNGQDIPYRYRREGFDNGYLKDDNDLWRFLWLNSADGKYRIVVGQEWDYREDMALAIVAAQLTPWLIALPFMLLILLLLLHRELRPLKKLAQALRFRSPESETPLDAKGVPSEVRPLVEALNQLFSRIHSMMVRERRFTSDAAHELRSPLAALKVQTEVAQLSGDDPLSRDKALTQLHAGIDRATRLVDQLLTLSRLDSLNNLQDVAEISLEELLQSAVMDIYHPAQQANIDVRLQLNAHDVIRTGQPLLLSLLVRNLLDNAIRYSPQGSVVDVTLHARSFTVRDNGPGVAPEILTHIGERFYRPPGQSVTGSGLGLSIVRRIATLHGMTVSFGNAAEGGFEAVVRW.

Topologically, residues 1–12 are cytoplasmic; the sequence is MKLTQRLSLRVR. A helical membrane pass occupies residues 13–33; sequence LTLIFLILVSITWAISSFVAW. Residues 34 to 161 are Periplasmic-facing; sequence RKTTDNVDEL…REDMALAIVA (128 aa). Residues 162–182 form a helical membrane-spanning segment; sequence AQLTPWLIALPFMLLILLLLL. Positions 183–235 constitute an HAMP domain; the sequence is HRELRPLKKLAQALRFRSPESETPLDAKGVPSEVRPLVEALNQLFSRIHSMMV. Residues 183-449 are Cytoplasmic-facing; that stretch reads HRELRPLKKL…EGGFEAVVRW (267 aa). The Histidine kinase domain occupies 243–449; the sequence is DAAHELRSPL…EGGFEAVVRW (207 aa). H246 is subject to Phosphohistidine; by autocatalysis.

It localises to the cell inner membrane. The enzyme catalyses ATP + protein L-histidine = ADP + protein N-phospho-L-histidine.. Its function is as follows. Member of a two-component regulatory system QseB/QseC. Activates the flagella regulon by activating transcription of FlhDC. May activate QseB by phosphorylation. In Salmonella typhi, this protein is Sensor protein QseC (qseC).